The chain runs to 279 residues: Thioredoxin-like 1-2, chloroplastic (279 aa).

A chloroplast-targeting transit peptide spans 1–34; sequence MAATAAQAVAVKGSVAVPPCGSRGRRRGAVASVR. The Thioredoxin domain occupies 61–203; it reads PRRSRPVPRN…FRDALAKHKP (143 aa). Active-site nucleophile residues include Cys126 and Cys129. Cys126 and Cys129 are disulfide-bonded. The disordered stretch occupies residues 242–279; that stretch reads GDAAAAQELDRGSTKLSPPAKPLVKQGSEERSLVSSGR.

It belongs to the thioredoxin family.

It localises to the plastid. The protein localises to the chloroplast. In terms of biological role, probable thiol-disulfide oxidoreductase that may participate in various redox reactions. The chain is Thioredoxin-like 1-2, chloroplastic from Oryza sativa subsp. japonica (Rice).